A 567-amino-acid polypeptide reads, in one-letter code: Urease subunit alpha (567 aa).

A Urease domain is found at 129-567; it reads GGIDSHIHFI…LPLAQRYFLF (439 aa). His134, His136, and Lys217 together coordinate Ni(2+). N6-carboxylysine is present on Lys217. Substrate is bound at residue His219. Ni(2+) is bound by residues His246 and His272. Residue His320 is the Proton donor of the active site. Asp360 serves as a coordination point for Ni(2+).

The protein belongs to the metallo-dependent hydrolases superfamily. Urease alpha subunit family. Heterotrimer of UreA (gamma), UreB (beta) and UreC (alpha) subunits. Three heterotrimers associate to form the active enzyme. Ni cation serves as cofactor. Carboxylation allows a single lysine to coordinate two nickel ions.

The protein resides in the cytoplasm. The enzyme catalyses urea + 2 H2O + H(+) = hydrogencarbonate + 2 NH4(+). Its pathway is nitrogen metabolism; urea degradation; CO(2) and NH(3) from urea (urease route): step 1/1. In Pseudomonas entomophila (strain L48), this protein is Urease subunit alpha.